A 103-amino-acid polypeptide reads, in one-letter code: Histone H4 (103 aa).

Gly residues predominate over residues 1-14; it reads MSGRGKGGKGLGKG. Positions 1-20 are disordered; the sequence is MSGRGKGGKGLGKGGAKRHR. 6 positions are modified to N6-(2-hydroxyisobutyryl)lysine; alternate: K6, K9, K13, K17, K32, and K45. K6 is subject to N6-acetyl-N6-methyllysine; alternate. N6-butyryllysine; alternate is present on residues K6, K9, K13, K17, K32, and K45. K6 bears the N6-glutaryllysine; alternate mark. Position 9 is an N6-propionyllysine; alternate (K9). K13 carries the N6-acetyl-N6-methyllysine; alternate modification. Position 13 is an N6-glutaryllysine; alternate (K13). 3 positions are modified to N6-propionyllysine; alternate: K17, K32, and K45. A DNA-binding region spans residues 17-21; the sequence is KRHRK. The residue at position 32 (K32) is an N6-glutaryllysine; alternate. K32 is modified (N6-succinyllysine; alternate). K60, K78, K80, and K92 each carry N6-glutaryllysine; alternate. K60 carries the post-translational modification N6-(2-hydroxyisobutyryl)lysine. 3 positions are modified to N6-(2-hydroxyisobutyryl)lysine; alternate: K78, K80, and K92. 3 positions are modified to N6-butyryllysine; alternate: K78, K80, and K92. 3 positions are modified to N6-propionyllysine; alternate: K78, K80, and K92. K78 carries the post-translational modification N6-succinyllysine. The residue at position 92 (K92) is an N6-succinyllysine; alternate.

It belongs to the histone H4 family. The nucleosome is a histone octamer containing two molecules each of H2A, H2B, H3 and H4 assembled in one H3-H4 heterotetramer and two H2A-H2B heterodimers. The octamer wraps approximately 147 bp of DNA. Butyrylation of histones marks active promoters and competes with histone acetylation. Post-translationally, glutarylation at Lys-92 (H4K91glu) destabilizes nucleosomes by promoting dissociation of the H2A-H2B dimers from nucleosomes.

Its subcellular location is the nucleus. The protein resides in the chromosome. In terms of biological role, core component of nucleosome. Nucleosomes wrap and compact DNA into chromatin, limiting DNA accessibility to the cellular machineries which require DNA as a template. Histones thereby play a central role in transcription regulation, DNA repair, DNA replication and chromosomal stability. DNA accessibility is regulated via a complex set of post-translational modifications of histones, also called histone code, and nucleosome remodeling. The protein is Histone H4 (H4.1) of Oikopleura dioica (Tunicate).